The sequence spans 374 residues: Glyceraldehyde-3-phosphate dehydrogenase A, chloroplastic (374 aa).

Residues 1–34 (MAAMMQKSAFTGSAVSSKSGVRAKAARAVVDVRA) constitute a chloroplast transit peptide. Residues 47–48 (RI), D71, and R116 each bind NADP(+). Residues C55 and C325 are joined by a disulfide bond. Residues 189 to 191 (SCT), T220, R235, 248 to 249 (TG), and R271 contribute to the D-glyceraldehyde 3-phosphate site. The active-site Nucleophile is C190. An NADP(+)-binding site is contributed by N353.

This sequence belongs to the glyceraldehyde-3-phosphate dehydrogenase family. Homotetramer. Component of a complex that contains two dimers of PRK, two tetramers of GAPDH and CP12. CP12 associates with GAPDH, causing its conformation to change. This GAPDH/CP12 complex binds PRK to form a half-complex (one unit). This unit probably dimerizes due partially to interactions between the enzymes of each unit.

The protein resides in the plastid. Its subcellular location is the chloroplast. It catalyses the reaction D-glyceraldehyde 3-phosphate + phosphate + NADP(+) = (2R)-3-phospho-glyceroyl phosphate + NADPH + H(+). The protein operates within carbohydrate biosynthesis; Calvin cycle. This is Glyceraldehyde-3-phosphate dehydrogenase A, chloroplastic (GAPA) from Chlamydomonas reinhardtii (Chlamydomonas smithii).